The primary structure comprises 189 residues: Pyridoxal 5'-phosphate synthase subunit PdxT (189 aa).

Residue 48–50 (GES) coordinates L-glutamine. Cys-80 (nucleophile) is an active-site residue. Residues Arg-107 and 136 to 137 (IR) each bind L-glutamine. Active-site charge relay system residues include His-172 and Glu-174.

This sequence belongs to the glutaminase PdxT/SNO family. As to quaternary structure, in the presence of PdxS, forms a dodecamer of heterodimers. Only shows activity in the heterodimer.

It catalyses the reaction aldehydo-D-ribose 5-phosphate + D-glyceraldehyde 3-phosphate + L-glutamine = pyridoxal 5'-phosphate + L-glutamate + phosphate + 3 H2O + H(+). It carries out the reaction L-glutamine + H2O = L-glutamate + NH4(+). It participates in cofactor biosynthesis; pyridoxal 5'-phosphate biosynthesis. Catalyzes the hydrolysis of glutamine to glutamate and ammonia as part of the biosynthesis of pyridoxal 5'-phosphate. The resulting ammonia molecule is channeled to the active site of PdxS. The sequence is that of Pyridoxal 5'-phosphate synthase subunit PdxT from Ruminiclostridium cellulolyticum (strain ATCC 35319 / DSM 5812 / JCM 6584 / H10) (Clostridium cellulolyticum).